Reading from the N-terminus, the 747-residue chain is Protein MTSS 2 (747 aa).

In terms of domain architecture, IMD spans 1-252 (METAEKECGA…EQVIKDLKGS (252 aa)). Residues 135–159 (EIKKKSSDTLKLQKKARKELLGKGD) adopt a coiled-coil conformation. Low complexity-rich tracts occupy residues 256 to 284 (WSYQ…SSSS), 321 to 332 (SSVSSHDSGFVS), and 349 to 367 (TSQK…TCQS). 4 disordered regions span residues 256 to 302 (WSYQ…YSPS), 318 to 441 (ARLS…EEVS), 457 to 522 (LEHQ…RNSN), and 543 to 599 (PTAG…PTVP). Phosphothreonine is present on T260. Phosphoserine is present on S264. The segment covering 368 to 378 (VSECSSPTSDW) has biased composition (polar residues). Residues 397–406 (DRVELLRDTE) show a composition bias toward basic and acidic residues. Position 441 is a phosphoserine (S441). Residues 466-479 (SLQYSSGYSTQTTT) show a composition bias toward low complexity. Positions 480 to 492 (PSCSEDTIPSQGS) are enriched in polar residues. A phosphoserine mark is found at S579, S601, S612, S624, S634, and S639. 2 disordered regions span residues 638-664 (LSLP…EDEQ) and 691-720 (GQFP…DPPA). T643 is subject to Phosphothreonine. 2 stretches are compositionally biased toward low complexity: residues 646–659 (GSPS…PGAG) and 696–707 (PTALSATPTEET). Residues 719–736 (PAEDMLVAIRRGVRLRRT) enclose the WH2 domain.

The protein belongs to the MTSS family. Interacts (via IMD domain) with RAC1; this interaction may be important to potentiate PDGF-induced RAC1 activation.

Its subcellular location is the cytoplasm. The protein localises to the cell projection. It is found in the ruffle. Involved in plasma membrane dynamics. Potentiated PDGF-mediated formation of membrane ruffles and lamellipodia in fibroblasts, acting via RAC1 activation. May function in actin bundling. This is Protein MTSS 2 from Homo sapiens (Human).